The chain runs to 174 residues: Guided entry of tail-anchored proteins factor 1 (174 aa).

Over 1–8 the chain is Lumenal; that stretch reads MSSAAADH. A helical transmembrane segment spans residues 9 to 29; that stretch reads WAWLLVLSFVFGCNVLRVLLP. At 30–99 the chain is on the cytoplasmic side; that stretch reads SFSSFMSRVL…VKARTAQLAK (70 aa). A coiled-coil region spans residues 39 to 94; it reads LQKDAEQESQMRAEIQDMKQELSTVNMMDEFARYARLERKINKMTDKLKTHVKART. The interval 39–97 is interaction with GET3/TRC40; that stretch reads LQKDAEQESQMRAEIQDMKQELSTVNMMDEFARYARLERKINKMTDKLKTHVKARTAQL. A helical transmembrane segment spans residues 100–120; that stretch reads IKWVISVAFYVLQAALMISLI. Residues 121–148 lie on the Lumenal side of the membrane; it reads WKYYSVPVAVVPSKWITPLDRLVAFPTR. Residues 149 to 169 traverse the membrane as a helical segment; that stretch reads VAGGVGITCWILVCNKVVAIV. The Cytoplasmic segment spans residues 170-174; that stretch reads LHPFS.

Belongs to the WRB/GET1 family. As to quaternary structure, component of the Golgi to ER traffic (GET) complex, which is composed of GET1/WRB, CAMLG/GET2 and GET3. Within the complex, GET1 and CAMLG form a heterotetramer which is stabilized by phosphatidylinositol binding and which binds to the GET3 homodimer. Interacts with CAMLG (via C-terminus). GET3 shows a higher affinity for CAMLG than for GET1.

The protein resides in the endoplasmic reticulum membrane. Required for the post-translational delivery of tail-anchored (TA) proteins to the endoplasmic reticulum. Together with CAMLG/GET2, acts as a membrane receptor for soluble GET3/TRC40, which recognizes and selectively binds the transmembrane domain of TA proteins in the cytosol. Required to ensure correct topology and ER insertion of CAMLG. The protein is Guided entry of tail-anchored proteins factor 1 of Pongo abelii (Sumatran orangutan).